We begin with the raw amino-acid sequence, 383 residues long: Chaperone protein DnaJ (383 aa).

The J domain occupies 4-68 (DLYETLNVSR…DQRARYDRFG (65 aa)). A CR-type zinc finger spans residues 139–221 (GGEKEITINH…CSGRGRNQKQ (83 aa)). Residues cysteine 152, cysteine 155, cysteine 169, cysteine 172, cysteine 195, cysteine 198, cysteine 209, and cysteine 212 each contribute to the Zn(2+) site. CXXCXGXG motif repeat units follow at residues 152-159 (CETCRGSG), 169-176 (CRNCGGQG), 195-202 (CPNCQGTG), and 209-216 (CPTCSGRG).

Belongs to the DnaJ family. As to quaternary structure, homodimer. Zn(2+) serves as cofactor.

Its subcellular location is the cytoplasm. In terms of biological role, participates actively in the response to hyperosmotic and heat shock by preventing the aggregation of stress-denatured proteins and by disaggregating proteins, also in an autonomous, DnaK-independent fashion. Unfolded proteins bind initially to DnaJ; upon interaction with the DnaJ-bound protein, DnaK hydrolyzes its bound ATP, resulting in the formation of a stable complex. GrpE releases ADP from DnaK; ATP binding to DnaK triggers the release of the substrate protein, thus completing the reaction cycle. Several rounds of ATP-dependent interactions between DnaJ, DnaK and GrpE are required for fully efficient folding. Also involved, together with DnaK and GrpE, in the DNA replication of plasmids through activation of initiation proteins. The polypeptide is Chaperone protein DnaJ (Gloeobacter violaceus (strain ATCC 29082 / PCC 7421)).